We begin with the raw amino-acid sequence, 187 residues long: MYTQNTMKKNWYVTVGAAAALAATVGMGTAMAGTLDSTWKEATLPQVKAMLEKDTGKVSGDTVTYSGKTVHVVAAAVLPGFPFPSFEVHDKKNPTLEIPAGATVDVTFINTNKGFGHSFDITKKGPPYAVMPVIDPIVAGTGFSPVPKDGKFGYTDFTWHPTAGTYYYVCQIPGHAATGMFGKIIVK.

A signal peptide spans 1-32 (MYTQNTMKKNWYVTVGAAAALAATVGMGTAMA). The 103-residue stretch at 85–187 (SFEVHDKKNP…TGMFGKIIVK (103 aa)) folds into the Plastocyanin-like domain. Residues histidine 117, cysteine 170, histidine 175, and methionine 180 each coordinate Cu cation.

Monomer. Requires Cu cation as cofactor.

It localises to the periplasm. Its function is as follows. Electron carrier from cytochrome c552 to the A-type oxidase. This is Rusticyanin (rus) from Acidithiobacillus ferridurans.